Reading from the N-terminus, the 347-residue chain is uncharacterized protein (347 aa).

Cys-39, His-65, Cys-95, Cys-98, Cys-101, Cys-109, and Glu-152 together coordinate Zn(2+).

It belongs to the zinc-containing alcohol dehydrogenase family. Zn(2+) serves as cofactor.

This is an uncharacterized protein from Escherichia coli (strain K12).